The sequence spans 155 residues: Sperm microtubule associated protein 1 (155 aa).

This Mus musculus (Mouse) protein is Sperm microtubule associated protein 1 (Spmap1).